The chain runs to 438 residues: Adenylosuccinate synthetase (438 aa).

Residues 12–18 (GDEGKGK) and 40–42 (GHT) each bind GTP. Aspartate 13 functions as the Proton acceptor in the catalytic mechanism. Residues aspartate 13 and glycine 40 each contribute to the Mg(2+) site. IMP is bound by residues 13 to 16 (DEGK), 38 to 41 (NAGH), threonine 128, arginine 142, glutamine 223, threonine 238, and arginine 302. The active-site Proton donor is the histidine 41. 298–304 (TTTGRPR) serves as a coordination point for substrate. GTP-binding positions include arginine 304, 330–332 (KLD), and 412–414 (GVG).

Belongs to the adenylosuccinate synthetase family. Homodimer. It depends on Mg(2+) as a cofactor.

It localises to the cytoplasm. The catalysed reaction is IMP + L-aspartate + GTP = N(6)-(1,2-dicarboxyethyl)-AMP + GDP + phosphate + 2 H(+). It participates in purine metabolism; AMP biosynthesis via de novo pathway; AMP from IMP: step 1/2. In terms of biological role, plays an important role in the de novo pathway of purine nucleotide biosynthesis. Catalyzes the first committed step in the biosynthesis of AMP from IMP. This chain is Adenylosuccinate synthetase, found in Leifsonia xyli subsp. xyli (strain CTCB07).